Consider the following 397-residue polypeptide: Acetyl-CoA acetyltransferase, cytosolic (397 aa).

Met1 is modified (N-acetylmethionine). Catalysis depends on Cys92, which acts as the Acyl-thioester intermediate. Lys200 bears the N6-acetyllysine mark. CoA-binding residues include Arg223 and Ser226. 2 positions are modified to N6-acetyllysine: Lys233 and Lys235. Residue Ser252 participates in CoA binding. The active-site Proton donor/acceptor is the Cys383.

It belongs to the thiolase-like superfamily. Thiolase family. As to quaternary structure, homotetramer.

It is found in the cytoplasm. Its subcellular location is the cytosol. The catalysed reaction is 2 acetyl-CoA = acetoacetyl-CoA + CoA. The protein operates within lipid metabolism; fatty acid metabolism. Its function is as follows. Involved in the biosynthetic pathway of cholesterol. In Homo sapiens (Human), this protein is Acetyl-CoA acetyltransferase, cytosolic (ACAT2).